The sequence spans 258 residues: Imidazole glycerol phosphate synthase subunit HisF (258 aa).

Active-site residues include Asp11 and Asp130.

Belongs to the HisA/HisF family. Heterodimer of HisH and HisF.

The protein localises to the cytoplasm. It catalyses the reaction 5-[(5-phospho-1-deoxy-D-ribulos-1-ylimino)methylamino]-1-(5-phospho-beta-D-ribosyl)imidazole-4-carboxamide + L-glutamine = D-erythro-1-(imidazol-4-yl)glycerol 3-phosphate + 5-amino-1-(5-phospho-beta-D-ribosyl)imidazole-4-carboxamide + L-glutamate + H(+). The protein operates within amino-acid biosynthesis; L-histidine biosynthesis; L-histidine from 5-phospho-alpha-D-ribose 1-diphosphate: step 5/9. In terms of biological role, IGPS catalyzes the conversion of PRFAR and glutamine to IGP, AICAR and glutamate. The HisF subunit catalyzes the cyclization activity that produces IGP and AICAR from PRFAR using the ammonia provided by the HisH subunit. This Prochlorococcus marinus (strain MIT 9211) protein is Imidazole glycerol phosphate synthase subunit HisF.